The sequence spans 379 residues: MPQDPSTRSSPARLLIPEPRAGRARHAACVLLAVCFVVLFLSGEPLAPIIRSVCTQLAALQLGVLLKGCCCLAEEIFHLHSRHHGSLWQVLCSCFPPRWYLALLLVGGSAYLDPPEDNGHSPRLALTLSCLCQLLVLALGLQKLSAVEVSELTESSKKNVAHGLAWSYYIGYLKVVLPRLKECMEELSRTNPMLRAHRDTWKLHILVPLGCDIWDDLEKADSNIQYLADLPETILTRAGIKRRVYKHSLYVIRDKDNKLRPCVLEFASPLQTLCAMSQDDCAAFSREQRLEQARLFYRSLRDILGSSKECAGLYRLIAYEEPAEPESHFLSGLILWHLQQQQREEYMVQEELPLGTSSVELSLQVSSSDLPQPLRSDCP.

At 1-23 (MPQDPSTRSSPARLLIPEPRAGR) the chain is on the cytoplasmic side. Residues 24 to 40 (ARHAACVLLAVCFVVLF) traverse the membrane as a helical segment. The Lumenal portion of the chain corresponds to 41–50 (LSGEPLAPII). A helical transmembrane segment spans residues 51-75 (RSVCTQLAALQLGVLLKGCCCLAEE). Residues 76–97 (IFHLHSRHHGSLWQVLCSCFPP) are Cytoplasmic-facing. The helical transmembrane segment at 98–111 (RWYLALLLVGGSAY) threads the bilayer. Over 112–121 (LDPPEDNGHS) the chain is Lumenal. A helical transmembrane segment spans residues 122–139 (PRLALTLSCLCQLLVLAL). The Cytoplasmic portion of the chain corresponds to 140–379 (GLQKLSAVEV…LPQPLRSDCP (240 aa)). The cyclic dinucleotide-binding domain (CBD) stretch occupies residues 158–345 (KNVAHGLAWS…WHLQQQQREE (188 aa)). 3',3'-c-di-GMP-binding positions include Ser-167, Tyr-172, 243–246 (RVYK), and Ser-268. Residues 167–172 (SYYIGY), 243–246 (RVYK), and Ser-268 each bind 2',3'-cGAMP. The pLxIS motif motif lies at 363–366 (LQVS). Ser-366 carries the phosphoserine; by TBK1 modification.

Belongs to the STING family. In terms of assembly, homodimer; forms a homodimer in absence of cyclic nucleotide (c-di-GMP or cGAMP). Homotetramer; in presence of cyclic nucleotide (c-di-GMP or cGAMP), forms tetramers and higher-order oligomers through side-by-side packing. Interacts (when phosphorylated) with IRF3; following activation and phosphorylation on the pLxIS motif by TBK1, recruits IRF3. In terms of processing, phosphorylation by TBK1 leads to activation and production of IFN-beta. Following cyclic nucleotide (c-di-GMP or cGAMP)-binding, activation and translocation from the endoplasmic reticulum, STING1 is phosphorylated by TBK1 at Ser-366 in the pLxIS motif. The phosphorylated pLxIS motif constitutes an IRF3-binding motif, leading to recruitment of the transcription factor IRF3 to induce type-I interferons and other cytokines.

It localises to the endoplasmic reticulum membrane. The protein localises to the cytoplasm. Its subcellular location is the perinuclear region. The protein resides in the endoplasmic reticulum-Golgi intermediate compartment membrane. It is found in the golgi apparatus membrane. It localises to the cytoplasmic vesicle. The protein localises to the autophagosome membrane. The catalysed reaction is H(+)(in) = H(+)(out). Facilitator of innate immune signaling that acts as a sensor of cytosolic DNA from bacteria and viruses and promotes the production of type I interferon (IFN-alpha and IFN-beta). Innate immune response is triggered in response to non-CpG double-stranded DNA from viruses and bacteria delivered to the cytoplasm. Acts by binding cyclic dinucleotides: recognizes and binds cyclic di-GMP (c-di-GMP), a second messenger produced by bacteria, and cyclic GMP-AMP (cGAMP), a messenger produced by CGAS in response to DNA virus in the cytosol. Upon binding of c-di-GMP or cGAMP, STING1 oligomerizes and is able to activate both NF-kappa-B and IRF3 transcription pathways to induce expression of type I interferon and exert a potent anti-viral state. Exhibits 2',3' phosphodiester linkage-specific ligand recognition: can bind both 2'-3' linked cGAMP and 3'-3' linked cGAMP but is preferentially activated by 2'-3' linked cGAMP. In addition to promote the production of type I interferons, plays a direct role in autophagy. Following cGAMP-binding, STING1 buds from the endoplasmic reticulum into COPII vesicles, which then form the endoplasmic reticulum-Golgi intermediate compartment (ERGIC). The ERGIC serves as the membrane source for LC3 lipidation, leading to formation of autophagosomes that target cytosolic DNA or DNA viruses for degradation by the lysosome. Promotes autophagy by acting as a proton channel that directs proton efflux from the Golgi to facilitate LC3 lipidation. The autophagy- and interferon-inducing activities can be uncoupled and autophagy induction is independent of TBK1 phosphorylation. This Gallus gallus (Chicken) protein is Stimulator of interferon genes protein.